The primary structure comprises 102 residues: Large ribosomal subunit protein uL24 (102 aa).

This sequence belongs to the universal ribosomal protein uL24 family. Part of the 50S ribosomal subunit.

Its function is as follows. One of two assembly initiator proteins, it binds directly to the 5'-end of the 23S rRNA, where it nucleates assembly of the 50S subunit. In terms of biological role, one of the proteins that surrounds the polypeptide exit tunnel on the outside of the subunit. This is Large ribosomal subunit protein uL24 from Burkholderia mallei (strain NCTC 10229).